The following is a 139-amino-acid chain: Putative pre-16S rRNA nuclease (139 aa).

Belongs to the YqgF nuclease family.

Its subcellular location is the cytoplasm. Its function is as follows. Could be a nuclease involved in processing of the 5'-end of pre-16S rRNA. This is Putative pre-16S rRNA nuclease from Streptococcus pneumoniae (strain JJA).